Here is a 527-residue protein sequence, read N- to C-terminus: Calcium and calcium/calmodulin-dependent serine/threonine-protein kinase (527 aa).

In terms of domain architecture, Protein kinase spans 12–314 (YEVSEILGRG…AQELLSDPWV (303 aa)). 18-26 (LGRGGFSVV) is an ATP binding site. Positions 25-51 (VVRKGTRKSNNDDEKSQSQSKSQSQSQ) are disordered. Over residues 41-51 (QSQSKSQSQSQ) the composition is skewed to low complexity. K55 serves as a coordination point for ATP. A disordered region spans residues 59–78 (RLGTSNNLPRKKDGGENSTE). D179 serves as the catalytic Proton acceptor. A helical transmembrane segment spans residues 239 to 255 (MWSLGVILYILLSGYPP). Position 279 is a phosphothreonine (T279). The segment at 337–350 (ARRKLRAAAIASVW) is calmodulin-binding. Residues 358-379 (TKKLKSLVGSYDLKEDEIENLR) are a coiled coil. EF-hand domains are found at residues 408 to 443 (SLIP…LKNS), 444 to 479 (KGED…LPYD), and 486 to 521 (TEPG…DSSL). Residues D421, N423, D425, T427, E432, D457, D459, S461, C463, E468, D499, N501, D503, K505, and E510 each coordinate Ca(2+).

It belongs to the protein kinase superfamily. CAMK Ser/Thr protein kinase family. CaMK subfamily. In terms of processing, autophosphorylation.

It is found in the membrane. It catalyses the reaction L-seryl-[protein] + ATP = O-phospho-L-seryl-[protein] + ADP + H(+). It carries out the reaction L-threonyl-[protein] + ATP = O-phospho-L-threonyl-[protein] + ADP + H(+). Activated by calcium. Autophosphorylation may play an important role in the regulation of the kinase activity. Protein kinase that recognizes the calcium spiking induced by Nod factors and translates this signal to components controlling nodulation and mycorrhizal infection responses. The chain is Calcium and calcium/calmodulin-dependent serine/threonine-protein kinase (SYM9) from Pisum sativum (Garden pea).